Consider the following 481-residue polypeptide: UDP-N-acetylmuramoyl-L-alanyl-D-glutamate--L-lysine ligase (481 aa).

Serine 42 lines the UDP-N-acetyl-alpha-D-muramoyl-L-alanyl-D-glutamate pocket. An ATP-binding site is contributed by 118–124 (GTKGKTT). UDP-N-acetyl-alpha-D-muramoyl-L-alanyl-D-glutamate is bound by residues 160–161 (TT), serine 187, and arginine 195. Lysine 229 is subject to N6-carboxylysine. The L-lysine recognition motif signature appears at 404–407 (DDPN).

This sequence belongs to the MurCDEF family. MurE subfamily. In terms of processing, carboxylation is probably crucial for Mg(2+) binding and, consequently, for the gamma-phosphate positioning of ATP.

It is found in the cytoplasm. The enzyme catalyses UDP-N-acetyl-alpha-D-muramoyl-L-alanyl-D-glutamate + L-lysine + ATP = UDP-N-acetyl-alpha-D-muramoyl-L-alanyl-gamma-D-glutamyl-L-lysine + ADP + phosphate + H(+). Its pathway is cell wall biogenesis; peptidoglycan biosynthesis. Its function is as follows. Catalyzes the addition of L-lysine to the nucleotide precursor UDP-N-acetylmuramoyl-L-alanyl-D-glutamate (UMAG) in the biosynthesis of bacterial cell-wall peptidoglycan. This chain is UDP-N-acetylmuramoyl-L-alanyl-D-glutamate--L-lysine ligase, found in Streptococcus pneumoniae (strain ATCC BAA-255 / R6).